Here is a 652-residue protein sequence, read N- to C-terminus: Acetyl-coenzyme A synthetase (652 aa).

CoA is bound by residues 191–194 (RAGR), threonine 311, and asparagine 335. Residues 387–389 (GEP), 411–416 (DTWWQT), aspartate 500, and arginine 515 each bind ATP. Serine 523 lines the CoA pocket. Position 526 (arginine 526) interacts with ATP. Mg(2+) contacts are provided by valine 537, histidine 539, and isoleucine 542. Arginine 584 provides a ligand contact to CoA. Position 609 is an N6-acetyllysine (lysine 609).

It belongs to the ATP-dependent AMP-binding enzyme family. Requires Mg(2+) as cofactor. Post-translationally, acetylated. Deacetylation by the SIR2-homolog deacetylase activates the enzyme.

It catalyses the reaction acetate + ATP + CoA = acetyl-CoA + AMP + diphosphate. Its function is as follows. Catalyzes the conversion of acetate into acetyl-CoA (AcCoA), an essential intermediate at the junction of anabolic and catabolic pathways. Acs undergoes a two-step reaction. In the first half reaction, Acs combines acetate with ATP to form acetyl-adenylate (AcAMP) intermediate. In the second half reaction, it can then transfer the acetyl group from AcAMP to the sulfhydryl group of CoA, forming the product AcCoA. Functionally, enables the cell to use acetate during aerobic growth to generate energy via the TCA cycle, and biosynthetic compounds via the glyoxylate shunt. Acetylates CheY, the response regulator involved in flagellar movement and chemotaxis. In Sodalis glossinidius (strain morsitans), this protein is Acetyl-coenzyme A synthetase.